The primary structure comprises 676 residues: Heat shock cognate HSP70 protein (676 aa).

Residues 613 to 676 are disordered; it reads SARREGKDGW…RIEAINANTE (64 aa). A compositionally biased stretch (acidic residues) spans 630–646; it reads GSGDDNDGDDNSDEEDE.

Belongs to the heat shock protein 70 family.

This is Heat shock cognate HSP70 protein from Trypanosoma brucei brucei.